Reading from the N-terminus, the 203-residue chain is NAD(P)H-quinone oxidoreductase subunit M, chloroplastic (203 aa).

A chloroplast-targeting transit peptide spans 1 to 21 (MAASSSYMACAKFSMLGWLGG). The segment covering 34-48 (SPQEQAEVQESQEVN) has biased composition (low complexity). Residues 34 to 61 (SPQEQAEVQESQEVNAQEEEKVKQPVQP) form a disordered region.

The protein belongs to the NDH complex subunit M family. As to quaternary structure, part of the chloroplast NDH complex, composed of a mixture of chloroplast and nucleus encoded subunits. Component of the NDH subcomplex A, at least composed of ndhH, ndhI, ndhJ, ndhK, ndhL, ndhM, ndhN and ndhO.

It is found in the plastid. The protein localises to the chloroplast thylakoid membrane. It catalyses the reaction a plastoquinone + NADH + (n+1) H(+)(in) = a plastoquinol + NAD(+) + n H(+)(out). The enzyme catalyses a plastoquinone + NADPH + (n+1) H(+)(in) = a plastoquinol + NADP(+) + n H(+)(out). Functionally, NDH shuttles electrons from NAD(P)H:plastoquinone, via FMN and iron-sulfur (Fe-S) centers, to quinones in the photosynthetic chain and possibly in a chloroplast respiratory chain. The immediate electron acceptor for the enzyme in this species is believed to be plastoquinone. Couples the redox reaction to proton translocation, and thus conserves the redox energy in a proton gradient. In Populus jackii (Balm of Gilead), this protein is NAD(P)H-quinone oxidoreductase subunit M, chloroplastic.